Here is a 575-residue protein sequence, read N- to C-terminus: Phosphoenolpyruvate-protein phosphotransferase (575 aa).

Residue His189 is the Tele-phosphohistidine intermediate of the active site. Arg296 and Arg332 together coordinate phosphoenolpyruvate. Residues Glu431 and Asp455 each coordinate Mg(2+). Residues 454–455 (ND) and Arg465 each bind phosphoenolpyruvate. Cys502 acts as the Proton donor in catalysis.

The protein belongs to the PEP-utilizing enzyme family. In terms of assembly, homodimer. Requires Mg(2+) as cofactor.

It is found in the cytoplasm. It catalyses the reaction L-histidyl-[protein] + phosphoenolpyruvate = N(pros)-phospho-L-histidyl-[protein] + pyruvate. General (non sugar-specific) component of the phosphoenolpyruvate-dependent sugar phosphotransferase system (sugar PTS). This major carbohydrate active-transport system catalyzes the phosphorylation of incoming sugar substrates concomitantly with their translocation across the cell membrane. Enzyme I transfers the phosphoryl group from phosphoenolpyruvate (PEP) to the phosphoryl carrier protein (HPr). This is Phosphoenolpyruvate-protein phosphotransferase (ptsI) from Haemophilus influenzae (strain ATCC 51907 / DSM 11121 / KW20 / Rd).